Here is a 371-residue protein sequence, read N- to C-terminus: Protein NDRG2 (371 aa).

Residues 1 to 22 form a disordered region; it reads MAELQEVQITEEKPLLPGQTPE. Position 2 is an N-acetylalanine (A2). Residue T20 is modified to Phosphothreonine. Residues S326 and S328 each carry the phosphoserine modification. The residue at position 330 (T330) is a Phosphothreonine. S332 is subject to Phosphoserine. The residue at position 334 (T334) is a Phosphothreonine. The segment at 334–371 is disordered; that stretch reads TSAASIDGSRSRSRTLSQSSESGTLPSGPPGHTMEVSC. 3 positions are modified to phosphoserine: S335, S338, and S344. Residue T348 is modified to Phosphothreonine. S350, S352, S353, and S355 each carry phosphoserine. The residue at position 357 (T357) is a Phosphothreonine. S370 carries the post-translational modification Phosphoserine.

It belongs to the NDRG family. As to expression, broadly expressed, with highest levels in heart, liver, skeletal muscle and aorta.

The protein localises to the cytoplasm. Its subcellular location is the perinuclear region. It is found in the cell projection. It localises to the growth cone. Contributes to the regulation of the Wnt signaling pathway. Down-regulates CTNNB1-mediated transcriptional activation of target genes, such as CCND1, and may thereby act as tumor suppressor. May be involved in dendritic cell and neuron differentiation. The polypeptide is Protein NDRG2 (Ndrg2) (Rattus norvegicus (Rat)).